A 268-amino-acid polypeptide reads, in one-letter code: Formamidopyrimidine-DNA glycosylase (268 aa).

P2 serves as the catalytic Schiff-base intermediate with DNA. Residue E3 is the Proton donor of the active site. The active-site Proton donor; for beta-elimination activity is the K56. Positions 91, 110, and 149 each coordinate DNA. An FPG-type zinc finger spans residues 234-268; it reads QVYGRFNQACPNCGQPLKRSRIGGRSSHYCEKCQQ. R258 serves as the catalytic Proton donor; for delta-elimination activity.

It belongs to the FPG family. Monomer. Zn(2+) is required as a cofactor.

It carries out the reaction Hydrolysis of DNA containing ring-opened 7-methylguanine residues, releasing 2,6-diamino-4-hydroxy-5-(N-methyl)formamidopyrimidine.. It catalyses the reaction 2'-deoxyribonucleotide-(2'-deoxyribose 5'-phosphate)-2'-deoxyribonucleotide-DNA = a 3'-end 2'-deoxyribonucleotide-(2,3-dehydro-2,3-deoxyribose 5'-phosphate)-DNA + a 5'-end 5'-phospho-2'-deoxyribonucleoside-DNA + H(+). Functionally, involved in base excision repair of DNA damaged by oxidation or by mutagenic agents. Acts as a DNA glycosylase that recognizes and removes damaged bases. Has a preference for oxidized purines, such as 7,8-dihydro-8-oxoguanine (8-oxoG). Has AP (apurinic/apyrimidinic) lyase activity and introduces nicks in the DNA strand. Cleaves the DNA backbone by beta-delta elimination to generate a single-strand break at the site of the removed base with both 3'- and 5'-phosphates. This Syntrophomonas wolfei subsp. wolfei (strain DSM 2245B / Goettingen) protein is Formamidopyrimidine-DNA glycosylase.